The following is a 390-amino-acid chain: Protein dimmed (390 aa).

Residues 24-163 (HNNNNYNTDG…RNMRRLESNE (140 aa)) are disordered. Composition is skewed to polar residues over residues 29 to 44 (YNTD…SAEG) and 55 to 64 (RTSQLSNNTY). The N-linked (GlcNAc...) asparagine glycan is linked to N61. Residues 69-78 (TDSSSQSDDT) are compositionally biased toward low complexity. Residues 79 to 90 (SGGGGSSNGGGS) are compositionally biased toward gly residues. The segment covering 122 to 141 (PSTIAPNSTSSNSSNANGNA) has biased composition (low complexity). N-linked (GlcNAc...) asparagine glycosylation is found at N128, N133, and N140. A compositionally biased stretch (basic and acidic residues) spans 151 to 163 (AKERNMRRLESNE). Residues 156–208 (MRRLESNERERMRMHSLNDAFQSLREVIPHVEMERRLSKIETLTLAKNYIINL) enclose the bHLH domain. 2 N-linked (GlcNAc...) asparagine glycosylation sites follow: N207 and N237. Residues 312-339 (QQQQASHLPHHQQAMHGHGHLGASIQSQ) are disordered. N347 carries N-linked (GlcNAc...) asparagine glycosylation.

As to quaternary structure, forms homodimers via the bHLH domain. These dimers bind the core E-box sequence. Detected in the developing nervous system in the bilateral domains in the cephalic region that later on forms part of the ring gland. Concomitantly expressed in the larval central nervous system (CNS), including the dorsal chain neurons as well as several bilateral clusters of neurons: large, midline protocerebral brain cells (MC), lateral protocerebral brain cells (LC), ventral subesophageal neurons (SE) and lateral abdominal neurons, and the transverse nerves. Outside the CNS, detected in at least three classes of endocrine cells: intrinsic cells of the corpora cardiaca, midgut cells, the Inka cells, lateral Bipolar neurons associated with the segmental transverse nerve, and several peptidergic cells of the enteric nervous system. Expressed only in central and peripheral neuroendocrine secretory cells and neurosecretory neurons but not in sensory or motor neurons.

It localises to the cytoplasm. Its function is as follows. Transcription factor that regulates neurosecretory (NS) cell function and neuroendocrine cell fate. Acts as a master regulator of common NS functions such as Phm expression and neuropeptide production. Plays a role as a regulator of peptide-containing large dense-core vesicle (LDCV) production and peptidergic cell differentiation. Controls transcription of FMRFamide in Tv neuronal cells and Fur1 in Ap-let cells (Tvb and dorsal apterous cells). Also required for up-regulation of Phm in Tv and Ap-let cells, and expression of three neuropeptide genes, Ms, FMRFamide and Lk. Influences both regulated and constitutive secretory activity in neuroendocrine cells at embryonic and postembryonic level. Loss of function studies show reduced cellular levels of various neuropeptides and neuropeptide biosynthetic enzymes. In Drosophila melanogaster (Fruit fly), this protein is Protein dimmed (dimm).